Here is an 80-residue protein sequence, read N- to C-terminus: Putative membrane protein insertion efficiency factor (80 aa).

Residues 61–80 are disordered; sequence KTGKDPVPDHFSLKRNQEGE. The span at 62-80 shows a compositional bias: basic and acidic residues; that stretch reads TGKDPVPDHFSLKRNQEGE.

Belongs to the UPF0161 family.

The protein resides in the cell membrane. Its function is as follows. Could be involved in insertion of integral membrane proteins into the membrane. This chain is Putative membrane protein insertion efficiency factor, found in Streptococcus pneumoniae serotype 2 (strain D39 / NCTC 7466).